The chain runs to 522 residues: Peptide chain release factor 3 (522 aa).

Positions 10 to 277 (ASRKTFAIIS…TFVDFAPSPS (268 aa)) constitute a tr-type G domain. Residues 19–26 (SHPDAGKT), 87–91 (DTPGH), and 141–144 (NKMD) each bind GTP.

This sequence belongs to the TRAFAC class translation factor GTPase superfamily. Classic translation factor GTPase family. PrfC subfamily.

It is found in the cytoplasm. Increases the formation of ribosomal termination complexes and stimulates activities of RF-1 and RF-2. It binds guanine nucleotides and has strong preference for UGA stop codons. It may interact directly with the ribosome. The stimulation of RF-1 and RF-2 is significantly reduced by GTP and GDP, but not by GMP. This chain is Peptide chain release factor 3, found in Listeria innocua serovar 6a (strain ATCC BAA-680 / CLIP 11262).